Consider the following 292-residue polypeptide: Nitrogenase iron protein 1 (292 aa).

ATP is bound at residue 12–19 (GKGGIGKS). Position 101 (C101) interacts with [4Fe-4S] cluster. R104 carries the post-translational modification ADP-ribosylarginine; by dinitrogenase reductase ADP-ribosyltransferase. C135 is a binding site for [4Fe-4S] cluster.

Belongs to the NifH/BchL/ChlL family. As to quaternary structure, homodimer. Requires [4Fe-4S] cluster as cofactor. Post-translationally, the reversible ADP-ribosylation of Arg-104 inactivates the nitrogenase reductase and regulates nitrogenase activity.

It carries out the reaction N2 + 8 reduced [2Fe-2S]-[ferredoxin] + 16 ATP + 16 H2O = H2 + 8 oxidized [2Fe-2S]-[ferredoxin] + 2 NH4(+) + 16 ADP + 16 phosphate + 6 H(+). Its function is as follows. The key enzymatic reactions in nitrogen fixation are catalyzed by the nitrogenase complex, which has 2 components: the iron protein and the molybdenum-iron protein. This chain is Nitrogenase iron protein 1 (nifH1), found in Paenibacillus durus (Paenibacillus azotofixans).